The chain runs to 239 residues: Small ribosomal subunit protein uS3 (239 aa).

In terms of domain architecture, KH type-2 spans 38–106 (IRELIEERFK…KTFVNVVEIK (69 aa)).

This sequence belongs to the universal ribosomal protein uS3 family. Part of the 30S ribosomal subunit. Forms a tight complex with proteins S10 and S14.

In terms of biological role, binds the lower part of the 30S subunit head. Binds mRNA in the 70S ribosome, positioning it for translation. The polypeptide is Small ribosomal subunit protein uS3 (Elusimicrobium minutum (strain Pei191)).